The primary structure comprises 395 residues: Elongation factor Tu (395 aa).

The tr-type G domain occupies 10-204; the sequence is KTHANIGTIG…AVDEYIPTPE (195 aa). Residues 19–26 are G1; sequence GHVDHGKT. Position 19–26 (19–26) interacts with GTP; that stretch reads GHVDHGKT. Thr26 contributes to the Mg(2+) binding site. A G2 region spans residues 60 to 64; that stretch reads GITIN. Residues 81–84 form a G3 region; that stretch reads DCPG. GTP-binding positions include 81-85 and 136-139; these read DCPGH and NKVD. Residues 136–139 are G4; sequence NKVD. The interval 174–176 is G5; it reads SAL.

It belongs to the TRAFAC class translation factor GTPase superfamily. Classic translation factor GTPase family. EF-Tu/EF-1A subfamily. As to quaternary structure, monomer.

It localises to the cytoplasm. It catalyses the reaction GTP + H2O = GDP + phosphate + H(+). GTP hydrolase that promotes the GTP-dependent binding of aminoacyl-tRNA to the A-site of ribosomes during protein biosynthesis. The protein is Elongation factor Tu of Macrococcus caseolyticus (strain JCSC5402) (Macrococcoides caseolyticum).